The chain runs to 102 residues: Small ribosomal subunit protein uS10 (102 aa).

It belongs to the universal ribosomal protein uS10 family. In terms of assembly, part of the 30S ribosomal subunit.

Its function is as follows. Involved in the binding of tRNA to the ribosomes. In Bartonella henselae (strain ATCC 49882 / DSM 28221 / CCUG 30454 / Houston 1) (Rochalimaea henselae), this protein is Small ribosomal subunit protein uS10.